Reading from the N-terminus, the 28-residue chain is Turritoxin F21-2 (28 aa).

Expressed by the venom duct.

It is found in the secreted. In terms of biological role, potent inhibitor of human alpha-3-beta-2 nAChRs (IC(50)=566.2 nM). Irreversibly inhibits the acetylcholine-induced response on human alpha-7/CHRNA7 (55% inhibition at 5.6 uM) and alpha-3-beta-2/CHRNA3-CHRNB2 (91% inhibition) nAChRs. The chain is Turritoxin F21-2 from Polystira nobilis (Sea snail).